The chain runs to 218 residues: Peptide methionine sulfoxide reductase MsrA (218 aa).

The active site involves C57.

The protein belongs to the MsrA Met sulfoxide reductase family.

It carries out the reaction L-methionyl-[protein] + [thioredoxin]-disulfide + H2O = L-methionyl-(S)-S-oxide-[protein] + [thioredoxin]-dithiol. The catalysed reaction is [thioredoxin]-disulfide + L-methionine + H2O = L-methionine (S)-S-oxide + [thioredoxin]-dithiol. Functionally, has an important function as a repair enzyme for proteins that have been inactivated by oxidation. Catalyzes the reversible oxidation-reduction of methionine sulfoxide in proteins to methionine. The protein is Peptide methionine sulfoxide reductase MsrA of Brucella abortus (strain S19).